Consider the following 70-residue polypeptide: Large ribosomal subunit protein bL31 (70 aa).

Residues Cys-16, Cys-18, Cys-37, and Cys-40 each contribute to the Zn(2+) site.

It belongs to the bacterial ribosomal protein bL31 family. Type A subfamily. As to quaternary structure, part of the 50S ribosomal subunit. Zn(2+) serves as cofactor.

In terms of biological role, binds the 23S rRNA. This Cronobacter sakazakii (strain ATCC BAA-894) (Enterobacter sakazakii) protein is Large ribosomal subunit protein bL31.